We begin with the raw amino-acid sequence, 356 residues long: Phosphoribosylformylglycinamidine cyclo-ligase (356 aa).

This sequence belongs to the AIR synthase family.

It localises to the cytoplasm. The catalysed reaction is 2-formamido-N(1)-(5-O-phospho-beta-D-ribosyl)acetamidine + ATP = 5-amino-1-(5-phospho-beta-D-ribosyl)imidazole + ADP + phosphate + H(+). The protein operates within purine metabolism; IMP biosynthesis via de novo pathway; 5-amino-1-(5-phospho-D-ribosyl)imidazole from N(2)-formyl-N(1)-(5-phospho-D-ribosyl)glycinamide: step 2/2. The chain is Phosphoribosylformylglycinamidine cyclo-ligase from Acinetobacter baumannii (strain AB307-0294).